A 481-amino-acid chain; its full sequence is Protein NRT1/ PTR FAMILY 1.3 (481 aa).

The next 12 membrane-spanning stretches (helical) occupy residues 32–52 (LAYFGLVPNMILFLTVEYGMG), 57–77 (ANILFLWSAATNFFPLVGAFI), 88–108 (IGFGSSISLTGMVLLWLTTII), 124–144 (LLKSVLLYSFFALTAIGAGGV), 173–193 (FNWYYFSVMVACFLSQSLLVF), 202–222 (IGFGVSVAAMALSVALFFAAS), 259–279 (IWSTGIILSLVTACQVSFIVL), 302–322 (IFLVISFLLFLGLYDLVIVPL), 333–353 (LGVMVRMWAGYVISVLCISAL), 374–394 (AMWLLPYMILGGIAEALNTIA), 422–442 (ASLISSWIITIVDVTTYGSWI), and 451–471 (LDYYYWLLVGLSLLNVLYFVW).

It belongs to the major facilitator superfamily. Proton-dependent oligopeptide transporter (POT/PTR) (TC 2.A.17) family. Expressed in roots.

The protein localises to the membrane. The polypeptide is Protein NRT1/ PTR FAMILY 1.3 (NPF1.3) (Arabidopsis thaliana (Mouse-ear cress)).